The following is a 69-amino-acid chain: Peptide Hact-1 (69 aa).

A signal peptide spans 1–21; it reads MDRKFHLCLLLVILGTIIVQG. Positions 22–57 are excised as a propeptide; sequence APLENENDADPDKPQKYRYYLKRATTEKKDNDPAKP. C59 and C68 form a disulfide bridge.

Tentacle (ecto and/or endoderm tissue), and possibly also nematoblasts.

Its subcellular location is the secreted. The protein localises to the nematocyst. Peptide with unknown function. Has a limited effect on human peripheral blood mononuclear cells. Does not show activity against both Gram-positive and Gram-negative bacteria nor is it active on the 26 voltage-gated ion channels tested. This chain is Peptide Hact-1, found in Heliofungia actiniformis (Mushroom coral).